Reading from the N-terminus, the 465-residue chain is Gamma-aminobutyric acid receptor subunit rho-2 (465 aa).

Residues 1 to 20 (MPYFTRLILFLFCLMVLVES) form the signal peptide. Residues 21-260 (RKPKRKRWTG…LYINFTLRRH (240 aa)) lie on the Extracellular side of the membrane. 4-aminobutanoate is bound at residue Arg105. Asn120 carries N-linked (GlcNAc...) asparagine glycosylation. Ser169 is a binding site for 4-aminobutanoate. Cysteines 178 and 192 form a disulfide. 4-aminobutanoate is bound at residue Glu197. Asn254 carries N-linked (GlcNAc...) asparagine glycosylation. Residues 261–281 (IFFFLLQTYFPATLMVMLSWV) form a helical membrane-spanning segment. Topologically, residues 282–293 (SFWIDRRAVPAR) are cytoplasmic. The helical transmembrane segment at 294 to 314 (VSLGITTVLTMTTIITGVNAS) threads the bilayer. The Extracellular portion of the chain corresponds to 315–325 (MPRVSYVKAVD). Residues 326–346 (IYLWVSFVFVFLSVLEYAAVN) traverse the membrane as a helical segment. Over 347–443 (YLTTVQERKE…IFQNTHAIDK (97 aa)) the chain is Cytoplasmic. The chain crosses the membrane as a helical span at residues 444–464 (YSRLIFPASYIFFNLIYWSVF). Residue Ser465 is a topological domain, extracellular.

It belongs to the ligand-gated ion channel (TC 1.A.9) family. Gamma-aminobutyric acid receptor (TC 1.A.9.5) subfamily. GABRR2 sub-subfamily. In terms of assembly, three rho subunits (rho-1/GBRR1, rho-2/GBRR2 and rho-3/GBRR3) coassemble either to form functional homopentamers or heteropentamers. Rho-2 is unable to form a functional homopentamer. Interacts with SQSTM1.

It localises to the postsynaptic cell membrane. The protein resides in the cell membrane. The enzyme catalyses chloride(in) = chloride(out). Its function is as follows. Rho subunit of the pentameric ligand-gated chloride channels responsible for mediating the effects of gamma-aminobutyric acid (GABA), the major inhibitory neurotransmitter in the brain. Rho-containing GABA-gated chloride channels are a subclass of GABA(A) receptors (GABAARs) entirely composed of rho subunits, where GABA molecules bind at the rho intersubunit interfaces. When activated by GABA, rho-GABAARs selectively allow the flow of chloride anions across the cell membrane down their electrochemical gradient. Rho-2 GABAARs may contribute to the regulation of glial development in the cerebellum by controlling extrasynaptic transmission. Rho-2 GABAARs are also involved in neuronal tonic (extrasynaptic) and phasic (synaptic) transmission in the Purkinje neurons of the cerebellum. Rho-2 GABAARs expressed in retina may play a role in retinal neurotransmission. This Homo sapiens (Human) protein is Gamma-aminobutyric acid receptor subunit rho-2.